The sequence spans 253 residues: MTTSRCSHLPEVLPDCTSSAAPVVKTVEDCGSLVNGQPQYVMQVSAKDGQLLSTVVRTLATQSPFNDRPMCRICHEGSSQEDLLSPCECTGTLGTIHRSCLEHWLSSSNTSYCELCHFRFAVERKPRPLVEWLRNPGPQHEKRTLFGDMVCFLFITPLATISGWLCLRGAVDHLHFSSRLEAVGLIALTVALFTIYLFWTLVSFRYHCRLYNEWRRTNQRVILLIPKSVNVPSNQPSLLGLHSVKRNSKETVV.

Residues 63–123 form an RING-CH-type zinc finger; it reads SPFNDRPMCR…ELCHFRFAVE (61 aa). Residues Cys71, Cys74, Cys87, Cys89, His97, Cys100, Cys113, and Cys116 each coordinate Zn(2+). The next 2 membrane-spanning stretches (helical) occupy residues 145–165 and 182–202; these read LFGD…SGWL and AVGL…WTLV. Residues Ser237 and Ser243 each carry the phosphoserine modification.

In terms of assembly, interacts with MARCHF2 and STX6.

Its subcellular location is the cytoplasmic vesicle membrane. The protein localises to the early endosome membrane. It carries out the reaction S-ubiquitinyl-[E2 ubiquitin-conjugating enzyme]-L-cysteine + [acceptor protein]-L-lysine = [E2 ubiquitin-conjugating enzyme]-L-cysteine + N(6)-ubiquitinyl-[acceptor protein]-L-lysine.. It functions in the pathway protein modification; protein ubiquitination. Functionally, E3 ubiquitin-protein ligase which may be involved in endosomal trafficking. E3 ubiquitin ligases accept ubiquitin from an E2 ubiquitin-conjugating enzyme in the form of a thioester and then directly transfer the ubiquitin to targeted substrates. The sequence is that of E3 ubiquitin-protein ligase MARCHF3 from Homo sapiens (Human).